The following is a 1826-amino-acid chain: Protein TIC 214 (1826 aa).

5 helical membrane passes run 18-38 (IINS…FSIG), 67-87 (FITG…HLAL), 127-147 (LSIQ…HFIL), 175-195 (VGWL…LVWI), and 221-241 (IFSI…PSPI). Residues 250–308 (TEEGWESEEETDVEIETASETKGTKQEQEGSTEEDPSPSLFSEEKEDPDKIDETEEIRV) form a disordered region. 2 stretches are compositionally biased toward acidic residues: residues 252 to 266 (EGWE…EIET) and 293 to 304 (EKEDPDKIDETE). A helical transmembrane segment spans residues 774 to 794 (LILIIQSIFRKYILLPSLIIV). Residues 1032–1057 (TKGLMKEKNSNAKKRGSPNKTSFNRK) form a disordered region. Positions 1042–1057 (NAKKRGSPNKTSFNRK) are enriched in basic residues. A helical membrane pass occupies residues 1081–1101 (FYLFITIFIKRIYIDIFVCII).

This sequence belongs to the TIC214 family. In terms of assembly, part of the Tic complex.

Its subcellular location is the plastid. It localises to the chloroplast inner membrane. Involved in protein precursor import into chloroplasts. May be part of an intermediate translocation complex acting as a protein-conducting channel at the inner envelope. This is Protein TIC 214 from Daucus carota (Wild carrot).